Reading from the N-terminus, the 389-residue chain is tRNA-specific 2-thiouridylase MnmA (389 aa).

Residues 35–42 (GMSGGVDS) and M61 contribute to the ATP site. The segment at 121–123 (NPD) is interaction with target base in tRNA. The active-site Nucleophile is C126. C126 and C223 are joined by a disulfide. G151 serves as a coordination point for ATP. The segment at 173-175 (KDQ) is interaction with tRNA. C223 functions as the Cysteine persulfide intermediate in the catalytic mechanism. The segment at 335–336 (RY) is interaction with tRNA.

This sequence belongs to the MnmA/TRMU family.

It is found in the cytoplasm. It carries out the reaction S-sulfanyl-L-cysteinyl-[protein] + uridine(34) in tRNA + AH2 + ATP = 2-thiouridine(34) in tRNA + L-cysteinyl-[protein] + A + AMP + diphosphate + H(+). Its function is as follows. Catalyzes the 2-thiolation of uridine at the wobble position (U34) of tRNA, leading to the formation of s(2)U34. The polypeptide is tRNA-specific 2-thiouridylase MnmA (Actinobacillus pleuropneumoniae serotype 5b (strain L20)).